The following is a 550-amino-acid chain: Eukaryotic translation initiation factor 3 subunit D-2 (550 aa).

The segment at 108–152 is disordered; sequence RTRGRTGRGTPNIASLGGSTAGGATASTTKYGKGRHTRNTQNVGR. Low complexity predominate over residues 115-136; the sequence is RGTPNIASLGGSTAGGATASTT. The segment at 290–304 is RNA gate; the sequence is QFDLLTVNETSVEPP. The tract at residues 527–550 is disordered; that stretch reads PENAFDSDRDEEESSEPLSNSNDN.

The protein belongs to the eIF-3 subunit D family. Component of the eukaryotic translation initiation factor 3 (eIF-3) complex. The eIF-3 complex interacts with pix.

The protein resides in the cytoplasm. Functionally, mRNA cap-binding component of the eukaryotic translation initiation factor 3 (eIF-3) complex, which is involved in protein synthesis of a specialized repertoire of mRNAs and, together with other initiation factors, stimulates binding of mRNA and methionyl-tRNAi to the 40S ribosome. The eIF-3 complex specifically targets and initiates translation of a subset of mRNAs involved in cell proliferation. In the eIF-3 complex, eif3d specifically recognizes and binds the 7-methylguanosine cap of a subset of mRNAs. The chain is Eukaryotic translation initiation factor 3 subunit D-2 from Drosophila sechellia (Fruit fly).